Consider the following 100-residue polypeptide: Ferredoxin (100 aa).

Residues 1 to 8 (MLSQVCRF) constitute a propeptide that is removed on maturation. Residues 9-100 (GTITAVKGGV…GENDGAVFEL (92 aa)) form the 2Fe-2S ferredoxin-type domain. Residues Cys46, Cys52, Cys55, and Cys85 each coordinate [2Fe-2S] cluster.

Requires [2Fe-2S] cluster as cofactor.

The protein localises to the hydrogenosome. Functionally, ferredoxins are iron-sulfur proteins that transfer electrons in a wide variety of metabolic reactions. It links pyruvate:ferredoxin oxidoreductase to hydrogenase. In Trichomonas vaginalis, this protein is Ferredoxin.